Reading from the N-terminus, the 69-residue chain is UPF0437 protein AZC_3451 (69 aa).

Belongs to the UPF0437 family.

The chain is UPF0437 protein AZC_3451 from Azorhizobium caulinodans (strain ATCC 43989 / DSM 5975 / JCM 20966 / LMG 6465 / NBRC 14845 / NCIMB 13405 / ORS 571).